Reading from the N-terminus, the 203-residue chain is dITP/XTP pyrophosphatase (203 aa).

Substrate is bound at residue 9-14 (SSNAGK). Residues Glu-42 and Asp-72 each contribute to the Mg(2+) site. Asp-72 (proton acceptor) is an active-site residue. Substrate is bound by residues Ser-73, 161–164 (FGYD), Lys-184, and 189–190 (HR).

It belongs to the HAM1 NTPase family. Homodimer. Mg(2+) serves as cofactor.

It catalyses the reaction XTP + H2O = XMP + diphosphate + H(+). It carries out the reaction dITP + H2O = dIMP + diphosphate + H(+). The catalysed reaction is ITP + H2O = IMP + diphosphate + H(+). Functionally, pyrophosphatase that catalyzes the hydrolysis of nucleoside triphosphates to their monophosphate derivatives, with a high preference for the non-canonical purine nucleotides XTP (xanthosine triphosphate), dITP (deoxyinosine triphosphate) and ITP. Seems to function as a house-cleaning enzyme that removes non-canonical purine nucleotides from the nucleotide pool, thus preventing their incorporation into DNA/RNA and avoiding chromosomal lesions. The sequence is that of dITP/XTP pyrophosphatase from Acidobacterium capsulatum (strain ATCC 51196 / DSM 11244 / BCRC 80197 / JCM 7670 / NBRC 15755 / NCIMB 13165 / 161).